The following is a 109-amino-acid chain: Large ribosomal subunit protein uL23 (109 aa).

It belongs to the universal ribosomal protein uL23 family. In terms of assembly, part of the 50S ribosomal subunit. Contacts protein L29, and trigger factor when it is bound to the ribosome.

Its function is as follows. One of the early assembly proteins it binds 23S rRNA. One of the proteins that surrounds the polypeptide exit tunnel on the outside of the ribosome. Forms the main docking site for trigger factor binding to the ribosome. The protein is Large ribosomal subunit protein uL23 of Chlorobium phaeobacteroides (strain BS1).